The primary structure comprises 190 residues: MRGLRPALSTFLFLLLITGGVYPLLTTALGQWWFPWQANGSLIREGDTVRGSALIGQNFTGNGYFHGRPSATAEMPYNPQASGGSNLAVSNPELDKQIAARVAALRAANPDASTNVPVELVTASASGLDNNITPQAAAWQIPRVAKARNLSVEQLTQLIAKYSQQPLVKYIGQPVVNIVELNLALDRLDE.

A helical membrane pass occupies residues 10-30; sequence TFLFLLLITGGVYPLLTTALG.

The protein belongs to the KdpC family. As to quaternary structure, the system is composed of three essential subunits: KdpA, KdpB and KdpC.

Its subcellular location is the cell inner membrane. In terms of biological role, part of the high-affinity ATP-driven potassium transport (or Kdp) system, which catalyzes the hydrolysis of ATP coupled with the electrogenic transport of potassium into the cytoplasm. This subunit acts as a catalytic chaperone that increases the ATP-binding affinity of the ATP-hydrolyzing subunit KdpB by the formation of a transient KdpB/KdpC/ATP ternary complex. The protein is Potassium-transporting ATPase KdpC subunit of Escherichia coli O45:K1 (strain S88 / ExPEC).